We begin with the raw amino-acid sequence, 194 residues long: Peptidyl-tRNA hydrolase (194 aa).

Residue Y16 participates in tRNA binding. H21 acts as the Proton acceptor in catalysis. The tRNA site is built by F67, N69, and N115.

Belongs to the PTH family. In terms of assembly, monomer.

Its subcellular location is the cytoplasm. The catalysed reaction is an N-acyl-L-alpha-aminoacyl-tRNA + H2O = an N-acyl-L-amino acid + a tRNA + H(+). In terms of biological role, hydrolyzes ribosome-free peptidyl-tRNAs (with 1 or more amino acids incorporated), which drop off the ribosome during protein synthesis, or as a result of ribosome stalling. Catalyzes the release of premature peptidyl moieties from peptidyl-tRNA molecules trapped in stalled 50S ribosomal subunits, and thus maintains levels of free tRNAs and 50S ribosomes. This Salmonella heidelberg (strain SL476) protein is Peptidyl-tRNA hydrolase.